Here is a 1141-residue protein sequence, read N- to C-terminus: DNA polymerase 120R (1141 aa).

It belongs to the DNA polymerase type-B family.

It carries out the reaction DNA(n) + a 2'-deoxyribonucleoside 5'-triphosphate = DNA(n+1) + diphosphate. DNA-directed DNA polymerase involved in viral DNA replication. The protein is DNA polymerase 120R of Invertebrate iridescent virus 3 (IIV-3).